We begin with the raw amino-acid sequence, 620 residues long: GTP-binding protein At3g49725, chloroplastic (620 aa).

The transit peptide at 1 to 65 (MSVTTSFGIW…SSFLARDRLR (65 aa)) directs the protein to the chloroplast. A disordered region spans residues 57 to 100 (SFLARDRLRSKTPSSSPFSSKRHTPKTSEIEEESTPKDSVLLNP). The region spanning 346 to 585 (GTIAVVGYTN…LIDDKMKEKK (240 aa)) is the Hflx-type G domain. GTP contacts are provided by residues 352 to 359 (GYTNAGKS), 377 to 381 (FATLD), 399 to 402 (DTVG), and 468 to 471 (NKID). Residues S359 and T379 each coordinate Mg(2+). Acidic residues-rich tracts occupy residues 478–497 (EEEK…EDEA) and 511–521 (TVDEDQIQNGD). A disordered region spans residues 478–521 (EEEKYLDDGEGVGEEDEDEADLKAEETVDASEATVDEDQIQNGD). GTP is bound at residue 563-565 (SAL). A disordered region spans residues 597-620 (LHKRKWRPPRNDDEEERLIPLDQR).

Belongs to the TRAFAC class OBG-HflX-like GTPase superfamily. HflX GTPase family. Requires Mg(2+) as cofactor.

It localises to the plastid. The protein localises to the chloroplast. This chain is GTP-binding protein At3g49725, chloroplastic, found in Arabidopsis thaliana (Mouse-ear cress).